Reading from the N-terminus, the 295-residue chain is Sulfotransferase 1A1 (295 aa).

48 to 53 lines the 3'-phosphoadenylyl sulfate pocket; the sequence is KSGTTW. A substrate-binding site is contributed by 106-108; sequence KTH. His-108 acts as the Proton acceptor in catalysis. 3'-phosphoadenylyl sulfate-binding positions include Arg-130, Ser-138, Tyr-193, 227–232, and 255–259; these read TSFKEM and FMRKG. Ser-138 bears the Phosphoserine mark.

It belongs to the sulfotransferase 1 family. Homodimer.

The protein resides in the cytoplasm. The catalysed reaction is a phenol + 3'-phosphoadenylyl sulfate = an aryl sulfate + adenosine 3',5'-bisphosphate + H(+). It catalyses the reaction 17beta-estradiol + 3'-phosphoadenylyl sulfate = 17beta-estradiol 3-sulfate + adenosine 3',5'-bisphosphate + H(+). It carries out the reaction 4-ethylphenol + 3'-phosphoadenylyl sulfate = 4-ethylphenyl sulfate + adenosine 3',5'-bisphosphate + H(+). The enzyme catalyses 4-nitrophenol + 3'-phosphoadenylyl sulfate = 4-nitrophenyl sulfate + adenosine 3',5'-bisphosphate. The catalysed reaction is dopamine + 3'-phosphoadenylyl sulfate = dopamine 3-O-sulfate + adenosine 3',5'-bisphosphate + H(+). It catalyses the reaction dopamine + 3'-phosphoadenylyl sulfate = dopamine 4-O-sulfate + adenosine 3',5'-bisphosphate + H(+). It carries out the reaction 3,3',5-triiodo-L-thyronine + 3'-phosphoadenylyl sulfate = 3,3',5-triiodo-L-thyronine sulfate + adenosine 3',5'-bisphosphate + H(+). The enzyme catalyses 3,3',5'-triiodo-L-thyronine + 3'-phosphoadenylyl sulfate = 3,3',5'-triiodo-L-thyronine sulfate + adenosine 3',5'-bisphosphate + H(+). The catalysed reaction is 3,3'-diiodo-L-thyronine + 3'-phosphoadenylyl sulfate = 3,3'-diiodo-L-thyronine sulfate + adenosine 3',5'-bisphosphate + H(+). It catalyses the reaction L-thyroxine + 3'-phosphoadenylyl sulfate = L-thyroxine sulfate + adenosine 3',5'-bisphosphate + H(+). Sulfotransferase that utilizes 3'-phospho-5'-adenylyl sulfate (PAPS) as sulfonate donor to catalyze the sulfate conjugation of a wide variety of acceptor molecules bearing a hydroxyl or an amine group. Sulfonation increases the water solubility of most compounds, and therefore their renal excretion, but it can also result in bioactivation to form active metabolites. Displays broad substrate specificity for small phenolic compounds. Plays an important role in the sulfonation of endogenous molecules such as steroid hormones. Mediates also the metabolic activation of carcinogenic N-hydroxyarylamines leading to highly reactive intermediates capable of forming DNA adducts, potentially resulting in mutagenesis. May play a role in gut microbiota-host metabolic interaction. O-sulfonates 4-ethylphenol (4-EP), a dietary tyrosine-derived metabolite produced by gut bacteria. The product 4-EPS crosses the blood-brain barrier and may negatively regulate oligodendrocyte maturation and myelination, affecting the functional connectivity of different brain regions associated with the limbic system. Catalyzes the sulfate conjugation of dopamine. Catalyzes the sulfation of T4 (L-thyroxine/3,5,3',5'-tetraiodothyronine), T3 (3,5,3'-triiodothyronine), rT3 (3,3',5'-triiodothyronine) and 3,3'-T2 (3,3'-diiodothyronine), with a substrate preference of 3,3'-T2 &gt; rT3 &gt; T3 &gt; T4. The protein is Sulfotransferase 1A1 (SULT1A1) of Macaca fascicularis (Crab-eating macaque).